The following is a 333-amino-acid chain: Taste receptor type 2 member 38 (333 aa).

Residues methionine 1 to threonine 17 are Extracellular-facing. The helical transmembrane segment at phenylalanine 18–leucine 38 threads the bilayer. The Cytoplasmic portion of the chain corresponds to valine 39–cysteine 55. A helical transmembrane segment spans residues valine 56–isoleucine 76. Topologically, residues glutamine 77–alanine 94 are extracellular. The chain crosses the membrane as a helical span at residues isoleucine 95–leucine 115. Topologically, residues leucine 116–glutamine 142 are cytoplasmic. Residues methionine 143 to phenylalanine 163 traverse the membrane as a helical segment. Topologically, residues serine 164–asparagine 190 are extracellular. An N-linked (GlcNAc...) asparagine glycan is attached at asparagine 178. The helical transmembrane segment at leucine 191 to valine 211 threads the bilayer. Topologically, residues serine 212 to serine 251 are cytoplasmic. Residues phenylalanine 252–leucine 272 traverse the membrane as a helical segment. Over tryptophan 273–lysine 276 the chain is Extracellular. A helical transmembrane segment spans residues isoleucine 277–leucine 297. At isoleucine 298 to cysteine 333 the chain is on the cytoplasmic side.

It belongs to the G-protein coupled receptor T2R family.

It localises to the membrane. Receptor that may play a role in the perception of bitterness and is gustducin-linked. May play a role in sensing the chemical composition of the gastrointestinal content. The activity of this receptor may stimulate alpha gustducin, mediate PLC-beta-2 activation and lead to the gating of TRPM5. The sequence is that of Taste receptor type 2 member 38 (TAS2R38) from Hylobates klossii (Kloss's gibbon).